The primary structure comprises 734 residues: Photosystem I P700 chlorophyll a apoprotein A2 (734 aa).

8 helical membrane passes run 46-69, 135-158, 175-199, 273-291, 330-353, 369-395, 417-439, and 517-535; these read IFAS…FHVA, LYTG…LHLQ, LNHH…HVAI, MAHH…GHMY, IHFQ…QHMY, AALY…IFFI, AIIS…LYVH, and FLVH…LILV. [4Fe-4S] cluster-binding residues include Cys559 and Cys568. The next 2 helical transmembrane spans lie at 575–596 and 643–665; these read AFYL…YWHW and LSVW…MFLI. Chlorophyll a is bound by residues His654, Met662, and Tyr670. Trp671 contacts phylloquinone. The chain crosses the membrane as a helical span at residues 707–727; that stretch reads LVGLAHFSVGYIFTYAAFLIA.

The protein belongs to the PsaA/PsaB family. As to quaternary structure, the PsaA/B heterodimer binds the P700 chlorophyll special pair and subsequent electron acceptors. PSI consists of a core antenna complex that captures photons, and an electron transfer chain that converts photonic excitation into a charge separation. The eukaryotic PSI reaction center is composed of at least 11 subunits. The cofactor is P700 is a chlorophyll a/chlorophyll a' dimer, A0 is one or more chlorophyll a, A1 is one or both phylloquinones and FX is a shared 4Fe-4S iron-sulfur center..

The protein resides in the plastid. It is found in the chloroplast thylakoid membrane. It catalyses the reaction reduced [plastocyanin] + hnu + oxidized [2Fe-2S]-[ferredoxin] = oxidized [plastocyanin] + reduced [2Fe-2S]-[ferredoxin]. PsaA and PsaB bind P700, the primary electron donor of photosystem I (PSI), as well as the electron acceptors A0, A1 and FX. PSI is a plastocyanin-ferredoxin oxidoreductase, converting photonic excitation into a charge separation, which transfers an electron from the donor P700 chlorophyll pair to the spectroscopically characterized acceptors A0, A1, FX, FA and FB in turn. Oxidized P700 is reduced on the lumenal side of the thylakoid membrane by plastocyanin. The sequence is that of Photosystem I P700 chlorophyll a apoprotein A2 from Hordeum vulgare (Barley).